Here is a 729-residue protein sequence, read N- to C-terminus: MAPPAKRAKRGWVPPGYKYLGPGNSLDQGEPTNPSDAAAKEHDEAYDQYIKSGKNPYLYFSAADQRFIDQTKDAKDWGGKVGHYFFRTKRAFAPKLATDSEPGTSGVSRAGKRTRPPAYIFINQARAKKKLTSSAAQQSSQTMSDGTSQPDSGNAVHSAARVERAADGPGGSGGGGSGGGGVGVSTGSYDNQTHYRFLGDGWVEITALATRLVHLNMPKSENYCRIRVHNTTDTSVKGNMAKDDAHEQIWTPWSLVDANAWGVWLQPSDWQYICNTMSQLNLVSLDQEIFNVVLKTVTEQDLGGQAIKIYNNDLTACMMVAVDSNNILPYTPAANSMETLGFYPWKPTIASPYRYYFCVDRDLSVTYENQEGTVEHNVMGTPKGMNSQFFTIENTQQITLLRTGDEFATGTYYFDTNSVKLTHTWQTNRQLGQPPLLSTFPEADTDAGTLTAQGSRHGTTQMGVNWVSEAIRTRPAQVGFCQPHNDFEASRAGPFAAPKVPADITQGVDKEANGSVRYSYGKQHGENWASHGPAPERYTWDETSFGSGRDTKDGFIQSAPLVVPPPLNGILTNANPIGTKNDIHFSNVFNSYGPLTAFSHPSPVYPQGQIWDKELDLEHKPRLHITAPFVCKNNAPGQMLVRLGPNLTDQYDPNGATLSRIVTYGTFFWKGKLTMRAKLRANTTWNPVYQVSAEDNGNSYMSVTKWLPTATGNMQSVPLITRPVARNTY.

Basic residues predominate over residues 1-10; the sequence is MAPPAKRAKR. Disordered stretches follow at residues 1 to 38, 96 to 115, and 130 to 185; these read MAPPAKRAKRGWVPPGYKYLGPGNSLDQGEPTNPSDAA, LATDSEPGTSGVSRAGKRTR, and KLTS…VGVS. The Nuclear localization signal signature appears at 4–13; it reads PAKRAKRGWV. The phospholipase A2-like stretch occupies residues 19–64; the sequence is YLGPGNSLDQGEPTNPSDAAAKEHDEAYDQYIKSGKNPYLYFSAAD. Residues 25–35 are compositionally biased toward polar residues; sequence SLDQGEPTNPS. A compositionally biased stretch (low complexity) spans 132–142; that stretch reads TSSAAQQSSQT. Polar residues predominate over residues 143–152; sequence MSDGTSQPDS. The segment covering 168 to 184 has biased composition (gly residues); sequence GPGGSGGGGSGGGGVGV. A Mg(2+)-binding site is contributed by Asn325.

It belongs to the parvoviridae capsid protein family.

It localises to the virion. It is found in the host nucleus. Functionally, capsid protein self-assembles to form an icosahedral capsid with a T=1 symmetry, about 22 nm in diameter, and consisting of 60 copies of two size variants of the capsid proteins, VP1 and VP2, which differ by the presence of an N-terminal extension in the minor protein VP1. The capsid encapsulates the genomic ssDNA. Capsid proteins are responsible for the attachment to host cell receptors. This attachment induces virion internalization predominantly through clathrin-dependent endocytosis. Binding to the host receptors also induces capsid rearrangements leading to surface exposure of VP1 N-terminus, specifically its phospholipase A2-like region and putative nuclear localization signal(s). VP1 N-terminus might serve as a lipolytic enzyme to breach the endosomal membrane during entry into host cell and might contribute to virus transport to the nucleus. The chain is Capsid protein VP1 from Mus musculus (Mouse).